A 90-amino-acid polypeptide reads, in one-letter code: U7-theraphotoxin-Hhn1a 3 (90 aa).

Residues 1–26 (MKTAIFTVVLALAVFAVLSFGWEANG) form the signal peptide. Positions 27–50 (KALSEEFTELIHEKEAASETEARE) are excised as a propeptide. 3 disulfide bridges follow: Cys-51–Cys-65, Cys-58–Cys-70, and Cys-64–Cys-81.

Belongs to the neurotoxin 10 (Hwtx-1) family. 13 (Hntx-13) subfamily. In terms of tissue distribution, expressed by the venom gland.

It localises to the secreted. Functionally, ion channel inhibitor. The chain is U7-theraphotoxin-Hhn1a 3 from Cyriopagopus hainanus (Chinese bird spider).